The chain runs to 417 residues: Tyrosine--tRNA ligase (417 aa).

L-tyrosine is bound at residue Tyr39. The 'HIGH' region motif lies at 44 to 53 (PTASSLHVGH). Residues Tyr176 and Gln180 each coordinate L-tyrosine. Residues 236-240 (KMGKS) carry the 'KMSKS' region motif. ATP is bound at residue Lys239. An S4 RNA-binding domain is found at 350–416 (VGVLSLIVRA…GKKKHVLVRP (67 aa)).

This sequence belongs to the class-I aminoacyl-tRNA synthetase family. TyrS type 1 subfamily. As to quaternary structure, homodimer.

It localises to the cytoplasm. It carries out the reaction tRNA(Tyr) + L-tyrosine + ATP = L-tyrosyl-tRNA(Tyr) + AMP + diphosphate + H(+). Its function is as follows. Catalyzes the attachment of tyrosine to tRNA(Tyr) in a two-step reaction: tyrosine is first activated by ATP to form Tyr-AMP and then transferred to the acceptor end of tRNA(Tyr). In Agrobacterium fabrum (strain C58 / ATCC 33970) (Agrobacterium tumefaciens (strain C58)), this protein is Tyrosine--tRNA ligase.